The primary structure comprises 335 residues: tRNA N6-adenosine threonylcarbamoyltransferase (335 aa).

Histidine 109, histidine 113, and tyrosine 130 together coordinate a divalent metal cation. Residues 130-134 (YVSGG), aspartate 162, glycine 177, glutamate 181, and asparagine 266 contribute to the substrate site. Residue aspartate 294 coordinates a divalent metal cation.

The protein belongs to the KAE1 / TsaD family. In terms of assembly, component of the EKC/KEOPS complex composed of at least tp53rk, tprkb, osgep and lage3; the whole complex dimerizes. Requires a divalent metal cation as cofactor.

It is found in the cytoplasm. The protein resides in the nucleus. It carries out the reaction L-threonylcarbamoyladenylate + adenosine(37) in tRNA = N(6)-L-threonylcarbamoyladenosine(37) in tRNA + AMP + H(+). Functionally, component of the EKC/KEOPS complex that is required for the formation of a threonylcarbamoyl group on adenosine at position 37 (t(6)A37) in tRNAs that read codons beginning with adenine. The complex is probably involved in the transfer of the threonylcarbamoyl moiety of threonylcarbamoyl-AMP (TC-AMP) to the N6 group of A37. Osgep likely plays a direct catalytic role in this reaction, but requires other protein(s) of the complex to fulfill this activity. The chain is tRNA N6-adenosine threonylcarbamoyltransferase from Xenopus laevis (African clawed frog).